Here is a 455-residue protein sequence, read N- to C-terminus: Ammonium transporter Rh type B (455 aa).

The Cytoplasmic portion of the chain corresponds to 1 to 10 (MARVPRHRRL). The chain crosses the membrane as a helical span at residues 11–31 (VLPLLCLLFQGATALLFAIFV). Topologically, residues 32 to 58 (RYNHETDAALWHWGNHSNVDNEFYFRY) are extracellular. N-linked (GlcNAc...) asparagine glycosylation is present at N46. The helical transmembrane segment at 59 to 79 (PSFQDVHVMVFVGFGFLMVFL) threads the bilayer. Residues 80–83 (QRYG) are Cytoplasmic-facing. The chain crosses the membrane as a helical span at residues 84-104 (FSSVGFTFLVASLTLQWATLL). The Extracellular portion of the chain corresponds to 105-121 (QGFLHSFHGGHIHVGVE). Residues 122–142 (SLINADFCAGAVLISFGAVLG) traverse the membrane as a helical segment. Topologically, residues 143–146 (KTGP) are cytoplasmic. Residues 147–167 (AQLLLMALLEAVLFSVNEFIL) form a helical membrane-spanning segment. The Extracellular portion of the chain corresponds to 168–175 (LSLLGVRD). A helical transmembrane segment spans residues 176-198 (AGGSMTIHTFGAYFGLFLSWVLY). Residues 199–216 (RSQLEKSRHRQSSVYNSD) are Cytoplasmic-facing. A helical membrane pass occupies residues 217-237 (LFAMIGTIFLWVFWPSFNSAP). The Extracellular segment spans residues 238 to 248 (TALGDGQHRTV). The helical transmembrane segment at 249–269 (VNTYYSLTASTLSTFALSALV) threads the bilayer. The Cytoplasmic portion of the chain corresponds to 270–279 (SGDGRLDMVH). Residues 280 to 300 (VQNAALAGGVVVGTSSEMMLT) form a helical membrane-spanning segment. P301 is a topological domain (extracellular). A helical transmembrane segment spans residues 302–322 (FGALAAGFLAGTVSTLGYKFF). The Cytoplasmic segment spans residues 323-343 (TPILESRFKLQDTCGVHNLHG). Residues 344-364 (MPGVLGAILGVVVAALATHEA) traverse the membrane as a helical segment. Residues 365–390 (YGDGLQSVFPLIAKGQRSATSQAVYQ) are Extracellular-facing. The chain crosses the membrane as a helical span at residues 391–411 (LFGMFVTLVFASVGGSLGGLL). Topologically, residues 412-455 (LRLPFLDSPPDSQCFEDQVYWEVPGEQETETQRPLRGGESDTRA) are cytoplasmic. The interval 413-421 (RLPFLDSPP) is interaction with ANK3. The segment at 434-455 (VPGEQETETQRPLRGGESDTRA) is disordered. A compositionally biased stretch (basic and acidic residues) spans 441 to 455 (ETQRPLRGGESDTRA).

It belongs to the ammonium transporter (TC 2.A.49) family. Rh subfamily. Interacts (via C-terminus) with ANK2 and ANK3; required for targeting to the basolateral membrane. N-glycosylated. In terms of tissue distribution, expressed in kidney by connecting segments and collecting tubules. Also expressed in liver by perivenous hepatocytes. Expressed in the forestomach and the fundus of the stomach. Expressed in duodenum, jejunum, ileum and colon at the level of villous (at protein level). Specifically expressed in kidney where it is restricted to the epithelial linings of the convoluted tubules and the loop of Henle. Also detected in ovary. Expressed by hepatocytes and dermal hair follicles and papillae.

It is found in the cell membrane. The protein localises to the basolateral cell membrane. The enzyme catalyses NH4(+)(in) = NH4(+)(out). It carries out the reaction methylamine(out) = methylamine(in). It catalyses the reaction CO2(out) = CO2(in). Inhibited by amiloride. Its function is as follows. Ammonium transporter involved in the maintenance of acid-base homeostasis. Transports ammonium and its related derivative methylammonium across the basolateral plasma membrane of epithelial cells likely contributing to renal transepithelial ammonia transport and ammonia metabolism. May transport either NH4(+) or NH3 ammonia species predominantly mediating an electrogenic NH4(+) transport. May act as a CO2 channel providing for renal acid secretion. In Mus musculus (Mouse), this protein is Ammonium transporter Rh type B (Rhbg).